Here is a 172-residue protein sequence, read N- to C-terminus: 3-hydroxydecanoyl-[acyl-carrier-protein] dehydratase (172 aa).

The active site involves histidine 71.

The protein belongs to the thioester dehydratase family. FabA subfamily. In terms of assembly, homodimer.

It is found in the cytoplasm. The catalysed reaction is a (3R)-hydroxyacyl-[ACP] = a (2E)-enoyl-[ACP] + H2O. It carries out the reaction (3R)-hydroxydecanoyl-[ACP] = (2E)-decenoyl-[ACP] + H2O. It catalyses the reaction (2E)-decenoyl-[ACP] = (3Z)-decenoyl-[ACP]. Its pathway is lipid metabolism; fatty acid biosynthesis. In terms of biological role, necessary for the introduction of cis unsaturation into fatty acids. Catalyzes the dehydration of (3R)-3-hydroxydecanoyl-ACP to E-(2)-decenoyl-ACP and then its isomerization to Z-(3)-decenoyl-ACP. Can catalyze the dehydratase reaction for beta-hydroxyacyl-ACPs with saturated chain lengths up to 16:0, being most active on intermediate chain length. The chain is 3-hydroxydecanoyl-[acyl-carrier-protein] dehydratase from Escherichia coli O127:H6 (strain E2348/69 / EPEC).